A 114-amino-acid chain; its full sequence is Aspartate 1-decarboxylase (114 aa).

Residue serine 25 is the Schiff-base intermediate with substrate; via pyruvic acid of the active site. Serine 25 is modified (pyruvic acid (Ser)). Position 57 (threonine 57) interacts with substrate. Catalysis depends on tyrosine 58, which acts as the Proton donor. 73 to 75 (GAA) lines the substrate pocket.

Belongs to the PanD family. As to quaternary structure, heterooctamer of four alpha and four beta subunits. It depends on pyruvate as a cofactor. Post-translationally, is synthesized initially as an inactive proenzyme, which is activated by self-cleavage at a specific serine bond to produce a beta-subunit with a hydroxyl group at its C-terminus and an alpha-subunit with a pyruvoyl group at its N-terminus.

It is found in the cytoplasm. The catalysed reaction is L-aspartate + H(+) = beta-alanine + CO2. It participates in cofactor biosynthesis; (R)-pantothenate biosynthesis; beta-alanine from L-aspartate: step 1/1. Functionally, catalyzes the pyruvoyl-dependent decarboxylation of aspartate to produce beta-alanine. The chain is Aspartate 1-decarboxylase from Thermotoga petrophila (strain ATCC BAA-488 / DSM 13995 / JCM 10881 / RKU-1).